We begin with the raw amino-acid sequence, 1030 residues long: FACT complex subunit spt-16 (1030 aa).

Residues 424-445 (RLKSNVIKFKEEQENREAEKDN) are a coiled coil. Basic and acidic residues-rich tracts occupy residues 435 to 449 (EQEN…DQKK) and 464 to 477 (TRNK…RKER). 2 disordered regions span residues 435 to 477 (EQEN…RKER) and 491 to 514 (ARLS…SYKT). The stretch at 623-645 (RLIKEMQKRFKTEEAEEREKEGA) forms a coiled coil. The tract at residues 927 to 1030 (VESDNEEAMD…KSGPSHKRRK (104 aa)) is disordered. 2 stretches are compositionally biased toward acidic residues: residues 929 to 951 (SDNE…EEDA) and 958 to 983 (ESDE…DSDE). Residues 987–1007 (KDWSDLEEEAANADKRREVEE) adopt a coiled-coil conformation. Over residues 998 to 1014 (NADKRREVEEPSRDRDR) the composition is skewed to basic and acidic residues. Over residues 1015–1030 (KRPHSSKSGPSHKRRK) the composition is skewed to basic residues.

Belongs to the peptidase M24 family. SPT16 subfamily. In terms of assembly, component of the FACT complex, a stable heterodimer of spt-16 and hmg-3 or hmg-4. Expressed in the germline and somatic cells.

Its subcellular location is the nucleus. The protein localises to the chromosome. Its function is as follows. Component of the FACT complex, a general chromatin factor that acts to reorganize nucleosomes. The FACT complex is involved in multiple processes that require DNA as a template such as mRNA elongation, DNA replication and DNA repair. During transcription elongation the FACT complex acts as a histone chaperone that both destabilizes and restores nucleosomal structure. It facilitates the passage of RNA polymerase II and transcription by promoting the dissociation of one histone H2A-H2B dimer from the nucleosome, then subsequently promotes the reestablishment of the nucleosome following the passage of RNA polymerase II. In embryos, promotes cell cycle progression and chromosomal segregation. Plays a role in the development of the anterior pharynx during embryonic development. This is FACT complex subunit spt-16 from Caenorhabditis elegans.